A 485-amino-acid polypeptide reads, in one-letter code: Otoconin-90 (485 aa).

A signal peptide spans M1–A17. The N-linked (GlcNAc...) asparagine glycan is linked to N37. Residues L75 to C189 are phospholipase A2-like 1. 7 disulfides stabilise this stretch: C84–C144, C98–C189, C100–C116, C115–C171, C122–C164, C131–C157, and C151–C162. N-linked (GlcNAc...) asparagine glycosylation is found at N178 and N288. Phospholipase A2-like regions lie at residues M315–C371 and C383–C435. A glycan (N-linked (GlcNAc...) asparagine) is linked at N417. Positions L444 to K485 are disordered.

This sequence belongs to the phospholipase A2 family. Interacts with OTOL1. In terms of tissue distribution, in the embryo, highly expressed in the developing otocyst with weak expression in the brain. Also expressed in nonsensory epithelia of both the vestibular and cochlear portions of the developing inner ear. Not expressed in adult or embryonic macular sensory epithelia.

It is found in the secreted. In terms of biological role, major protein of the otoconia, a calcium carbonate structure in the saccule and utricle of the ear. Together with OTOL1, acts as a scaffold for otoconia biomineralization: sequesters calcium and forms interconnecting fibrils between otoconia that are incorporated into the calcium crystal structure. Together with OTOL1, modulates calcite crystal morphology and growth kinetics. It is unlikely that this protein has phospholipase A2 activity. The chain is Otoconin-90 from Mus musculus (Mouse).